Here is a 541-residue protein sequence, read N- to C-terminus: MPTDLQAWNALRQHHDVVRETPMQQWFAEAGAAQRVDAFSLEASGLYLDYSKNRITGETLALLMKLAEEAGVPARRDAMFAGEHINATEDRAALHVALRALPDAPFKVDGASVMPAIHDVLRRMREFAGRVRSGVWTGSTGQGITDIVNIGIGGSDLGPRMVCRALAHLADPRGPRVHFVSNVDGTELAETLQRLDPARTLAIVCSKTFTTLETMANACSMRDWFLRHGVAENQLARHFVAVSTNRDAVVDFGIDPNNMFEFWDWIGGRFSLWSSVGLSIALAVGFDAFEDLLLGARAMDDHFRTAPLAQNMPVVMAMLGIWYRNFHDMPTSCMAPYSTSLELFPAFLQQLEMESNGKSVQLDGRPVDADTAPVVWGTAGTNGQHAYFQMIHQGSQIVPVDFVAPLVPPRELPGHHVKLLANCFAQAEALMRGRSAEELQAAGVDAARIPHMVFEGNRPSNMLLMENLTPHVLGALIALYEHRTFVQGIVWNINSFDQWGVELGKILARPIEAELSGNATEAHDASTAALIARARRSLARS.

The active-site Proton donor is the glutamate 354. Catalysis depends on residues histidine 385 and lysine 505.

The protein belongs to the GPI family.

Its subcellular location is the cytoplasm. The enzyme catalyses alpha-D-glucose 6-phosphate = beta-D-fructose 6-phosphate. Its pathway is carbohydrate biosynthesis; gluconeogenesis. It participates in carbohydrate degradation; glycolysis; D-glyceraldehyde 3-phosphate and glycerone phosphate from D-glucose: step 2/4. Catalyzes the reversible isomerization of glucose-6-phosphate to fructose-6-phosphate. This chain is Glucose-6-phosphate isomerase, found in Cupriavidus metallidurans (strain ATCC 43123 / DSM 2839 / NBRC 102507 / CH34) (Ralstonia metallidurans).